The following is a 98-amino-acid chain: NADH-ubiquinone oxidoreductase chain 4L (98 aa).

The next 3 membrane-spanning stretches (helical) occupy residues 1 to 21 (MNLIDLILIAIYVIGISGLIF), 26 to 46 (IINILIISELNLGTLGMLFVL), and 61 to 81 (LYILTFTAAESAIGLAIVVIL).

This sequence belongs to the complex I subunit 4L family.

It is found in the mitochondrion membrane. The catalysed reaction is a ubiquinone + NADH + 5 H(+)(in) = a ubiquinol + NAD(+) + 4 H(+)(out). Functionally, core subunit of the mitochondrial membrane respiratory chain NADH dehydrogenase (Complex I) that is believed to belong to the minimal assembly required for catalysis. Complex I functions in the transfer of electrons from NADH to the respiratory chain. The immediate electron acceptor for the enzyme is believed to be ubiquinone. This chain is NADH-ubiquinone oxidoreductase chain 4L (nad4L), found in Dictyostelium citrinum (Slime mold).